We begin with the raw amino-acid sequence, 374 residues long: RNA polymerase sigma factor SigA (374 aa).

The tract at residues 141-211 (LAEANLRLVV…TRAIADQART (71 aa)) is sigma-70 factor domain-2. Residues 165-168 (DLIQ) carry the Interaction with polymerase core subunit RpoC motif. Residues 220–296 (ETINKLIRVQ…DQDATSPSDH (77 aa)) form a sigma-70 factor domain-3 region. The sigma-70 factor domain-4 stretch occupies residues 309 to 362 (VLDTLTDREENVLRLRFGLDDGRTRTLEEVGRVFGVTRERIRQIEAKALRKLRH). Positions 335-354 (LEEVGRVFGVTRERIRQIEA) form a DNA-binding region, H-T-H motif.

This sequence belongs to the sigma-70 factor family. RpoD/SigA subfamily. In terms of assembly, interacts transiently with the RNA polymerase catalytic core.

The protein localises to the cytoplasm. Functionally, sigma factors are initiation factors that promote the attachment of RNA polymerase to specific initiation sites and are then released. This sigma factor is the primary sigma factor during exponential growth. The sequence is that of RNA polymerase sigma factor SigA from Listeria innocua serovar 6a (strain ATCC BAA-680 / CLIP 11262).